Here is a 465-residue protein sequence, read N- to C-terminus: Ribosomal oxygenase 2 (465 aa).

The JmjC domain occupies 139 to 271 (QPQRFKDELW…NSWGDFLLDT (133 aa)). Residues histidine 179, aspartate 181, and histidine 240 each coordinate Fe cation. Serine 309 is modified (phosphoserine).

This sequence belongs to the ROX family. MINA53 subfamily. The cofactor is Fe(2+). As to expression, expressed in liver, skeletal muscle, heart, pancreas, and placenta. Not detected in brain, lung or kidney. Expressed in several lung cancer tissues, but is barely detected in the adjacent non-cancerous tissues. Also highly expressed in several esophageal squamous cell carcinoma (ESCC), and colon cancer tissues, and in various cancer cell lines.

It localises to the nucleus. The protein resides in the nucleolus. It carries out the reaction L-histidyl-[protein] + 2-oxoglutarate + O2 = (3S)-3-hydroxy-L-histidyl-[protein] + succinate + CO2. It catalyses the reaction L-histidyl-[ribosomal protein uL15] + 2-oxoglutarate + O2 = (3S)-3-hydroxy-L-histidyl-[ribosomal protein uL15] + succinate + CO2. Oxygenase that can act as both a histone lysine demethylase and a ribosomal histidine hydroxylase. Is involved in the demethylation of trimethylated 'Lys-9' on histone H3 (H3K9me3), leading to an increase in ribosomal RNA expression. Also catalyzes the hydroxylation of 60S ribosomal protein L27a on 'His-39'. May play an important role in cell growth and survival. May be involved in ribosome biogenesis, most likely during the assembly process of pre-ribosomal particles. This is Ribosomal oxygenase 2 from Homo sapiens (Human).